Here is a 153-residue protein sequence, read N- to C-terminus: 3-hydroxyacyl-[acyl-carrier-protein] dehydratase FabZ (153 aa).

Residue histidine 54 is part of the active site.

This sequence belongs to the thioester dehydratase family. FabZ subfamily.

Its subcellular location is the cytoplasm. The enzyme catalyses a (3R)-hydroxyacyl-[ACP] = a (2E)-enoyl-[ACP] + H2O. Its function is as follows. Involved in unsaturated fatty acids biosynthesis. Catalyzes the dehydration of short chain beta-hydroxyacyl-ACPs and long chain saturated and unsaturated beta-hydroxyacyl-ACPs. The sequence is that of 3-hydroxyacyl-[acyl-carrier-protein] dehydratase FabZ from Shewanella denitrificans (strain OS217 / ATCC BAA-1090 / DSM 15013).